Here is a 375-residue protein sequence, read N- to C-terminus: Chaperone protein DnaJ (375 aa).

One can recognise a J domain in the interval 6–71 (DYYEVLGVPK…EKRRQYDQFG (66 aa)). The CR-type zinc finger occupies 138 to 220 (GTTKKIDVTL…CYGTGYISSK (83 aa)). The Zn(2+) site is built by Cys-151, Cys-154, Cys-168, Cys-171, Cys-194, Cys-197, Cys-208, and Cys-211. 4 CXXCXGXG motif repeats span residues 151 to 158 (CSSCHGTG), 168 to 175 (CSKCGGRG), 194 to 201 (CPDCHGTG), and 208 to 215 (CPDCYGTG).

This sequence belongs to the DnaJ family. In terms of assembly, homodimer. The cofactor is Zn(2+).

It localises to the cytoplasm. Functionally, participates actively in the response to hyperosmotic and heat shock by preventing the aggregation of stress-denatured proteins and by disaggregating proteins, also in an autonomous, DnaK-independent fashion. Unfolded proteins bind initially to DnaJ; upon interaction with the DnaJ-bound protein, DnaK hydrolyzes its bound ATP, resulting in the formation of a stable complex. GrpE releases ADP from DnaK; ATP binding to DnaK triggers the release of the substrate protein, thus completing the reaction cycle. Several rounds of ATP-dependent interactions between DnaJ, DnaK and GrpE are required for fully efficient folding. Also involved, together with DnaK and GrpE, in the DNA replication of plasmids through activation of initiation proteins. This chain is Chaperone protein DnaJ, found in Lachnospira eligens (strain ATCC 27750 / DSM 3376 / VPI C15-48 / C15-B4) (Eubacterium eligens).